Consider the following 278-residue polypeptide: Probable NADP-dependent mannitol dehydrogenase (278 aa).

NADP(+)-binding residues include isoleucine 45, asparagine 117, and lysine 152. Residues serine 171 and tyrosine 186 each act as proton donor in the active site. NADP(+) is bound by residues tyrosine 186, lysine 190, and threonine 220. The active-site Lowers pKa of active site Tyr is the lysine 190.

The protein belongs to the short-chain dehydrogenases/reductases (SDR) family. As to quaternary structure, homotetramer.

It catalyses the reaction D-mannitol + NADP(+) = D-fructose + NADPH + H(+). Functionally, versatile oxidoreductase that catalyzes the oxidation and reduction of polar as well as non-polar substrates at a very broad pH range. Preferentially oxidizes secondary alcohols. Has highest activity for racemic 2-heptanol and racemic octanol. Is also an efficient reductase for selected substrates. Substrate selectivity was found for medium chain length ketones with the carbonyl function at position C-2. Has highest activities for ribulose and fructose. The enzyme is (R)-selective in the reduction direction and produces exclusively the (R)-enantiomer. The polypeptide is Probable NADP-dependent mannitol dehydrogenase (Yarrowia lipolytica (strain CLIB 122 / E 150) (Yeast)).